A 536-amino-acid chain; its full sequence is Phosphoenolpyruvate carboxykinase (ATP) (536 aa).

Arg61, Tyr195, and Lys201 together coordinate substrate. ATP contacts are provided by residues Lys201, His220, and 236–244 (GLSGTGKTT). The Mn(2+) site is built by Lys201 and His220. Asp257 is a Mn(2+) binding site. 3 residues coordinate ATP: Glu285, Arg322, and Thr447. A substrate-binding site is contributed by Arg322.

It belongs to the phosphoenolpyruvate carboxykinase (ATP) family. It depends on Mn(2+) as a cofactor.

It localises to the cytoplasm. The catalysed reaction is oxaloacetate + ATP = phosphoenolpyruvate + ADP + CO2. It participates in carbohydrate biosynthesis; gluconeogenesis. Involved in the gluconeogenesis. Catalyzes the conversion of oxaloacetate (OAA) to phosphoenolpyruvate (PEP) through direct phosphoryl transfer between the nucleoside triphosphate and OAA. This is Phosphoenolpyruvate carboxykinase (ATP) from Rhizobium etli (strain ATCC 51251 / DSM 11541 / JCM 21823 / NBRC 15573 / CFN 42).